Here is an 800-residue protein sequence, read N- to C-terminus: Elongation factor G, mitochondrial (800 aa).

The N-terminal 59 residues, 1–59, are a transit peptide targeting the mitochondrion; it reads MRVIRAVATLHAGRAAAVRQGVRSVSLGACRAAVETPSLRSAGSQFESRRLFSRSSYLR. The tr-type G domain occupies 99–385; that stretch reads ARVRNIGIAA…AVCDYLPNPN (287 aa). GTP contacts are provided by residues 108–115, 183–187, and 237–240; these read AHIDSGKT, DTPGH, and NKMD.

Belongs to the TRAFAC class translation factor GTPase superfamily. Classic translation factor GTPase family. EF-G/EF-2 subfamily.

The protein resides in the mitochondrion. It functions in the pathway protein biosynthesis; polypeptide chain elongation. Functionally, mitochondrial GTPase that catalyzes the GTP-dependent ribosomal translocation step during translation elongation. During this step, the ribosome changes from the pre-translocational (PRE) to the post-translocational (POST) state as the newly formed A-site-bound peptidyl-tRNA and P-site-bound deacylated tRNA move to the P and E sites, respectively. Catalyzes the coordinated movement of the two tRNA molecules, the mRNA and conformational changes in the ribosome. The chain is Elongation factor G, mitochondrial (mef1) from Neurospora crassa (strain ATCC 24698 / 74-OR23-1A / CBS 708.71 / DSM 1257 / FGSC 987).